Here is a 602-residue protein sequence, read N- to C-terminus: 4-hydroxy-3-methylbut-2-en-1-yl diphosphate synthase (flavodoxin) (602 aa).

4 residues coordinate [4Fe-4S] cluster: Cys-508, Cys-511, Cys-543, and Glu-550.

The protein belongs to the IspG family. Requires [4Fe-4S] cluster as cofactor.

It catalyses the reaction (2E)-4-hydroxy-3-methylbut-2-enyl diphosphate + oxidized [flavodoxin] + H2O + 2 H(+) = 2-C-methyl-D-erythritol 2,4-cyclic diphosphate + reduced [flavodoxin]. Its pathway is isoprenoid biosynthesis; isopentenyl diphosphate biosynthesis via DXP pathway; isopentenyl diphosphate from 1-deoxy-D-xylulose 5-phosphate: step 5/6. Converts 2C-methyl-D-erythritol 2,4-cyclodiphosphate (ME-2,4cPP) into 1-hydroxy-2-methyl-2-(E)-butenyl 4-diphosphate. This Chlamydia trachomatis serovar L2b (strain UCH-1/proctitis) protein is 4-hydroxy-3-methylbut-2-en-1-yl diphosphate synthase (flavodoxin).